Here is a 146-residue protein sequence, read N- to C-terminus: Antiholin-like protein LrgA (146 aa).

The next 4 membrane-spanning stretches (helical) occupy residues 7–29, 34–53, 65–87, and 97–119; these read YGFLTQAFIFAVIMLVSNMIAAI, IPASVVGLVLLFLLLCLKVI, LTSLIGFLFVPSGISVMNSLGVM, and VILLATIILLGATGLFSQLILSL.

Belongs to the CidA/LrgA family. LrgA subfamily.

Its subcellular location is the cell membrane. Inhibits the expression or activity of extracellular murein hydrolases by interacting, possibly with LrgB, with the holin-like protein CidA. The LrgAB and CidA proteins may affect the proton motive force of the membrane. May be involved in programmed cell death (PCD), possibly triggering PCD in response to antibiotics and environmental stresses. The chain is Antiholin-like protein LrgA from Bacillus subtilis (strain 168).